The chain runs to 147 residues: MSKKQFYLVREDMLTDAMQRTLEAKALLSAGKVRKINEAVHRVGLSRSAFYKYKDGIFPFHAIAKERIMTFSINLADRSGTLSQLLNIVADTGANILTINQTIPLQGRANITLSVDTAPIEIDINELFERMEALESVERVELVGSGS.

Residues 70–145 form the ACT domain; the sequence is TFSINLADRS…SVERVELVGS (76 aa).

The protein belongs to the UPF0735 family.

The chain is UPF0735 ACT domain-containing protein ABC1543 from Shouchella clausii (strain KSM-K16) (Alkalihalobacillus clausii).